Here is a 449-residue protein sequence, read N- to C-terminus: Probable ubiquitin carboxyl-terminal hydrolase 8 (449 aa).

The UBP-type zinc-finger motif lies at 6–113; that stretch reads EGCQHLKLKP…FKIKNIKAWQ (108 aa). Residues cysteine 8, histidine 10, cysteine 38, cysteine 41, cysteine 51, cysteine 54, cysteine 59, histidine 64, histidine 68, histidine 74, cysteine 87, and cysteine 90 each coordinate Zn(2+). Positions 145-435 constitute a USP domain; that stretch reads RGIQNLGATC…QAYLLFYHER (291 aa). Cysteine 154 serves as the catalytic Nucleophile. The Zn(2+) site is built by histidine 178, cysteine 183, cysteine 188, cysteine 191, histidine 246, cysteine 257, cysteine 259, histidine 262, cysteine 275, cysteine 278, cysteine 317, and cysteine 320. The active-site Proton acceptor is histidine 395.

It belongs to the peptidase C19 family. UBP8 subfamily. Component of the 1.8 MDa SAGA (Spt-Ada-Gcn5 acetyltransferase) complex, which is composed of 19 subunits tra1, spt7, taf5, ngg1/ada3, sgf73, spt20, spt8, taf12, taf6, hfi1/ada1, ubp8, gcn5, ada2, spt3, sgf29, taf10, taf9, sgf11 and sus1. The SAGA complex is composed of 4 modules, namely the HAT (histone acetyltransferase) module (gcn5, ada2, ngg1/ada3 and sgf29), the DUB (deubiquitinating) module (ubp8, sgf11, sgf73 and sus1), the core or TAF (TBP-associated factor) module (taf5, taf6, taf9, taf10 and taf12), and the Tra1 or SPT (Suppressor of Ty) module (tra1, hfi1/ada1, spt3, spt7, spt8 and spt20). The Tra1/SPT module binds activators, the core module recruits TBP (TATA-binding protein), the HAT module contains the histone H3 acetyltransferase gcn5, and the DUB module comprises the histone H2B deubiquitinase ubp8.

Its subcellular location is the nucleus. The protein localises to the nucleoplasm. The enzyme catalyses Thiol-dependent hydrolysis of ester, thioester, amide, peptide and isopeptide bonds formed by the C-terminal Gly of ubiquitin (a 76-residue protein attached to proteins as an intracellular targeting signal).. Its function is as follows. Histone deubiquitinating enzyme component of the transcription coactivator SAGA complex. SAGA acts as a general cofactor required for essentially all RNA polymerase II transcription. At the promoters, SAGA is required for transcription pre-initiation complex (PIC) recruitment. It influences RNA polymerase II transcriptional activity through different activities such as TBP interaction (via core/TAF module) and promoter selectivity, interaction with transcription activators (via Tra1/SPT module), and chromatin modification through histone acetylation (via HAT module) and deubiquitination (via DUB module). SAGA preferentially acetylates histones H3 (to form H3K9ac, H3K14ac, H3K18ac and H3K23ac) and H2B and deubiquitinates histone H2B. SAGA interacts with DNA via upstream activating sequences (UASs). Within the DUB module, the correctly positioned zinc finger domains of sgf11 and sgf73 are both required to fully activate the ubiquitin hydrolase ubp8. The DUB module is also linked to the splicing efficiency of many transcripts. In Schizosaccharomyces pombe (strain 972 / ATCC 24843) (Fission yeast), this protein is Probable ubiquitin carboxyl-terminal hydrolase 8 (ubp8).